Reading from the N-terminus, the 201-residue chain is MKQHRENLPIILASSSPARIELLNRIKIIPSQIIPADIDETPNLRELPAPLAIRLAYEKAIKVASQVEESAIIIAADTVAAVGRRILPKATTYEEVKNCIKMVSGRRHRVYTGLCIIKTENDQLTVKQKIVQTIVKFKKLSDEEINFYCSLDEGRGKAGGCKISGYAEAFISFISGSYSNVMGLPLFETANALTSLGFKVY.

Aspartate 77 acts as the Proton acceptor in catalysis.

This sequence belongs to the Maf family. Requires a divalent metal cation as cofactor.

The protein resides in the cytoplasm. It carries out the reaction a ribonucleoside 5'-triphosphate + H2O = a ribonucleoside 5'-phosphate + diphosphate + H(+). It catalyses the reaction a 2'-deoxyribonucleoside 5'-triphosphate + H2O = a 2'-deoxyribonucleoside 5'-phosphate + diphosphate + H(+). Nucleoside triphosphate pyrophosphatase. May have a dual role in cell division arrest and in preventing the incorporation of modified nucleotides into cellular nucleic acids. The protein is Nucleoside triphosphate pyrophosphatase of Rickettsia akari (strain Hartford).